The following is a 472-amino-acid chain: Glutamate--tRNA ligase 2 (472 aa).

Residues P10–G20 carry the 'HIGH' region motif. 4 residues coordinate Zn(2+): C99, C101, C126, and D128. The span at E112 to D130 shows a compositional bias: basic and acidic residues. The tract at residues E112–V137 is disordered. The 'KMSKS' region signature appears at R240–R244. K243 is a binding site for ATP.

Belongs to the class-I aminoacyl-tRNA synthetase family. Glutamate--tRNA ligase type 1 subfamily. In terms of assembly, monomer. It depends on Zn(2+) as a cofactor.

The protein localises to the cytoplasm. The enzyme catalyses tRNA(Glu) + L-glutamate + ATP = L-glutamyl-tRNA(Glu) + AMP + diphosphate. Catalyzes the attachment of glutamate to tRNA(Glu) in a two-step reaction: glutamate is first activated by ATP to form Glu-AMP and then transferred to the acceptor end of tRNA(Glu). In Halorhodospira halophila (strain DSM 244 / SL1) (Ectothiorhodospira halophila (strain DSM 244 / SL1)), this protein is Glutamate--tRNA ligase 2.